We begin with the raw amino-acid sequence, 416 residues long: CinA-like protein (416 aa).

The protein belongs to the CinA family.

This is CinA-like protein from Syntrophomonas wolfei subsp. wolfei (strain DSM 2245B / Goettingen).